The following is a 260-amino-acid chain: UPF0246 protein APP7_0648 (260 aa).

This sequence belongs to the UPF0246 family.

This Actinobacillus pleuropneumoniae serotype 7 (strain AP76) protein is UPF0246 protein APP7_0648.